Reading from the N-terminus, the 182-residue chain is Large ribosomal subunit protein uL6 (182 aa).

The protein belongs to the universal ribosomal protein uL6 family. Part of the 50S ribosomal subunit.

Its function is as follows. This protein binds to the 23S rRNA, and is important in its secondary structure. It is located near the subunit interface in the base of the L7/L12 stalk, and near the tRNA binding site of the peptidyltransferase center. This chain is Large ribosomal subunit protein uL6, found in Dehalococcoides mccartyi (strain CBDB1).